Here is a 307-residue protein sequence, read N- to C-terminus: B3 domain-containing protein At5g18000 (307 aa).

The TF-B3 1 DNA-binding region spans 20-115 (FFKILRREDH…CFNVTIFEAD (96 aa)). Disordered stretches follow at residues 122–141 (PRKT…RKSI) and 151–209 (IESW…SEAG). Over residues 166 to 177 (ESTSGRLTQKQE) the composition is skewed to polar residues. A compositionally biased stretch (basic and acidic residues) spans 178-192 (LNLRKKEADKTEKSK). Positions 214-307 (IPEFKLTIKK…TEMRVKVSKE (94 aa)) form a DNA-binding region, TF-B3 2.

Its subcellular location is the nucleus. This is B3 domain-containing protein At5g18000 from Arabidopsis thaliana (Mouse-ear cress).